The chain runs to 115 residues: Large ribosomal subunit protein bL19 (115 aa).

Belongs to the bacterial ribosomal protein bL19 family.

Functionally, this protein is located at the 30S-50S ribosomal subunit interface and may play a role in the structure and function of the aminoacyl-tRNA binding site. In Streptococcus sanguinis (strain SK36), this protein is Large ribosomal subunit protein bL19.